The primary structure comprises 158 residues: Pyruvoyl-dependent arginine decarboxylase (158 aa).

Serine 44 is modified (pyruvic acid (Ser)).

This sequence belongs to the PdaD family. It depends on pyruvate as a cofactor.

The enzyme catalyses L-arginine + H(+) = agmatine + CO2. The sequence is that of Pyruvoyl-dependent arginine decarboxylase from Pyrococcus furiosus (strain ATCC 43587 / DSM 3638 / JCM 8422 / Vc1).